The chain runs to 227 residues: Cleavage and polyadenylation specificity factor subunit 5 (227 aa).

The residue at position 2 (S2) is an N-acetylserine. The interval 2–147 (SVVPPNRSQT…DWVIDDCIGN (146 aa)) is necessary for RNA-binding. R15 bears the Omega-N-methylarginine mark. K23 and K29 each carry N6-acetyllysine. Phosphotyrosine is present on Y40. K56 carries the N6-acetyllysine modification. In terms of domain architecture, Nudix hydrolase spans 76-201 (MRRTVEGVLI…KLVAAPLFEL (126 aa)). The segment at 81-160 (EGVLIVHEHR…PNFEPPQYPY (80 aa)) is necessary for interactions with PAPOLA and PABPN1. Positions 102-104 (TFF) are interaction with RNA. Residues 109-130 (GELNPGEDEVEGLKRLMTEILG) carry the Nudix box motif.

It belongs to the Nudix hydrolase family. CPSF5 subfamily. In terms of assembly, homodimer (via N- and C-terminus); binds RNA as homodimer. Component of the cleavage factor Im (CFIm) complex which is a heterotetramer composed of two subunits of NUDT21/CPSF5 and two subunits of CPSF6 or CPSF7 or a heterodimer of CPSF6 and CPSF7. The cleavage factor Im (CFIm) complex associates with the CPSF and CSTF complexes to promote the assembly of the core mRNA 3'-processing machinery. Interacts with CPSF6 (via the RRM domain); this interaction is direct and enhances binding to RNA. Interacts with CPSF7. Interacts with FIP1L1; this interaction occurs in a RNA sequence-specific manner. Interacts with PABPN1. Interacts (via N-terminus) with PAPOLA (via C-terminus); this interaction is direct and diminished by acetylation. Interacts with SNRNP70. Interacts with VIRMA. Post-translationally, acetylated mainly by p300/CBP, recruited to the complex by CPSF6. Acetylation decreases interaction with PAPAO. Deacetylated by the class I/II HDACs, HDAC1, HDAC3 and HDAC10, and by the class III HDACs, SIRT1 and SIRT2. Expressed in testis. Expressed in male germ cells (at protein level).

The protein localises to the nucleus. It localises to the cytoplasm. Its function is as follows. Component of the cleavage factor Im (CFIm) complex that functions as an activator of the pre-mRNA 3'-end cleavage and polyadenylation processing required for the maturation of pre-mRNA into functional mRNAs. CFIm contributes to the recruitment of multiprotein complexes on specific sequences on the pre-mRNA 3'-end, so called cleavage and polyadenylation signals (pA signals). Most pre-mRNAs contain multiple pA signals, resulting in alternative cleavage and polyadenylation (APA) producing mRNAs with variable 3'-end formation. The CFIm complex acts as a key regulator of cleavage and polyadenylation site choice during APA through its binding to 5'-UGUA-3' elements localized in the 3'-untranslated region (UTR) for a huge number of pre-mRNAs. NUDT21/CPSF5 activates indirectly the mRNA 3'-processing machinery by recruiting CPSF6 and/or CPSF7. Binds to 5'-UGUA-3' elements localized upstream of pA signals that act as enhancers of pre-mRNA 3'-end processing. The homodimer mediates simultaneous sequence-specific recognition of two 5'-UGUA-3' elements within the pre-mRNA. Plays a role in somatic cell fate transitions and pluripotency by regulating widespread changes in gene expression through an APA-dependent function. Binds to chromatin. Binds to, but does not hydrolyze mono- and di-adenosine nucleotides. The chain is Cleavage and polyadenylation specificity factor subunit 5 from Mus musculus (Mouse).